The sequence spans 192 residues: Type-4 uracil-DNA glycosylase (192 aa).

Residues cysteine 18 and cysteine 21 each coordinate [4Fe-4S] cluster. Uracil-binding positions include glycine 45 to glycine 47, phenylalanine 59, and asparagine 85. Cysteine 89 and cysteine 105 together coordinate [4Fe-4S] cluster. Position 161 (histidine 161) interacts with uracil.

It belongs to the uracil-DNA glycosylase (UDG) superfamily. Type 4 (UDGa) family.

The catalysed reaction is Hydrolyzes single-stranded DNA or mismatched double-stranded DNA and polynucleotides, releasing free uracil.. Functionally, removes uracil bases that are present in DNA as a result of either deamination of cytosine or misincorporation of dUMP instead of dTMP. Can remove uracil from double-stranded DNA containing either a U/G or U/A base pair as well as from single-stranded DNA. The polypeptide is Type-4 uracil-DNA glycosylase (Thermotoga maritima (strain ATCC 43589 / DSM 3109 / JCM 10099 / NBRC 100826 / MSB8)).